Here is a 418-residue protein sequence, read N- to C-terminus: Alditol oxidase (418 aa).

The FAD-binding PCMH-type domain occupies 13–179; the sequence is ITYTAKELLR…TSLTLDLEPA (167 aa). FAD contacts are provided by residues 41–47, Ser106, Ser111, Gly114, 118–121, and Val169; these read VLGSGHS and TGTH. Residue His46 is modified to Pros-8alpha-FAD histidine. Ser106 provides a ligand contact to D-sorbitol. Ser106 contributes to the xylitol binding site. Residues Glu320, Arg322, and Thr345 each coordinate D-sorbitol. Xylitol is bound by residues Glu320, Arg322, and Thr345. Arg322 contacts FAD. His372 is an FAD binding site. D-sorbitol is bound at residue Lys375. Lys375 provides a ligand contact to xylitol.

The protein belongs to the oxygen-dependent FAD-linked oxidoreductase family. In terms of assembly, monomer. FAD serves as cofactor.

The enzyme catalyses an alditol + O2 = an aldose + H2O2. The catalysed reaction is xylitol + O2 = D-xylose + H2O2. It carries out the reaction D-sorbitol + O2 = D-glucose + H2O2. In terms of biological role, oxidase that performs selective oxidation of the terminal primary hydroxyl group of several alditols, with a reduction of O2 to H2O2. Shows highest activity on xylitol and D-sorbitol, and a poor efficiency with D-mannitol and L-threitol. This is Alditol oxidase (xyoA) from Streptomyces coelicolor (strain ATCC BAA-471 / A3(2) / M145).